The primary structure comprises 1128 residues: Testis-expressed protein 2 (1128 aa).

Disordered regions lie at residues 1–28 (MTSL…VQRS), 71–99 (AKED…GLSV), and 130–279 (PLAL…FFKV). The span at 130 to 186 (PLALSPGSSSSGPLASSPSVSSLSEQKTSSSSPLSSPSKSPVLSSSASSSALSSAKP) shows a compositional bias: low complexity. Phosphoserine is present on S195. Positions 248-274 (QFTQPRNTGGDSKTAPSSPLTSPSDTR) are enriched in polar residues. Phosphothreonine is present on T261. Residues S264, S265, S269, and S294 each carry the phosphoserine modification. The tract at residues 345–387 (KEEEGDSEGEGYGSDSNTSRSDHLKPTEDASKEVEPKGSQASS) is disordered. Positions 364 to 380 (RSDHLKPTEDASKEVEP) are enriched in basic and acidic residues. The next 2 helical transmembrane spans lie at 473–493 (TLGF…PYYM) and 495–515 (GLFL…WFFT). Residue N593 is glycosylated (N-linked (GlcNAc...) asparagine). Basic and acidic residues predominate over residues 645–671 (SKAQSDKEATEEKPPPEKELPSEDLKK). Disordered stretches follow at residues 645–688 (SKAQ…DPIL), 716–765 (RKPA…QKEL), 787–821 (QDNR…EEEQ), and 945–981 (ADSD…GYVG). S733, S739, S745, S749, S752, S799, and S816 each carry phosphoserine. A compositionally biased stretch (low complexity) spans 736-751 (SSPSGHLSHSRSSSKG). Polar residues predominate over residues 796–806 (PVQSAESSPTA). The SMP-LTD domain occupies 817-1102 (EEEEQEAWVN…MPNMDDVYIP (286 aa)). The segment covering 946-963 (DSDEESSSAGSSEEDDPP) has biased composition (acidic residues).

The protein resides in the endoplasmic reticulum membrane. It is found in the nucleus membrane. In terms of biological role, during endoplasmic reticulum (ER) stress or when cellular ceramide levels increase, may induce contacts between the ER and medial-Golgi complex to facilitate non-vesicular transport of ceramides from the ER to the Golgi complex where they are converted to complex sphingolipids, preventing toxic ceramide accumulation. The polypeptide is Testis-expressed protein 2 (Tex2) (Mus musculus (Mouse)).